The following is a 143-amino-acid chain: Transcriptional regulator MraZ (143 aa).

SpoVT-AbrB domains follow at residues 5 to 47 and 76 to 119; these read TYTP…PRAE and TDEQ…DAQA.

This sequence belongs to the MraZ family. In terms of assembly, forms oligomers.

It localises to the cytoplasm. The protein resides in the nucleoid. The protein is Transcriptional regulator MraZ of Mycobacterium avium (strain 104).